The following is an 834-amino-acid chain: WW domain-containing adapter protein with coiled-coil homolog (834 aa).

Disordered stretches follow at residues 1 to 247 (MVMH…WSEH), 268 to 411 (KPKE…SVAT), and 430 to 504 (VTGA…GAKG). Over residues 22–31 (HTSYQSSKYS) the composition is skewed to low complexity. The span at 33–50 (SKRDYERDRSSNYRDRDL) shows a compositional bias: basic and acidic residues. Residues 53 to 77 (GAGGGGGGGSAGGGGGGSGNGGGPL) show a composition bias toward gly residues. Residues 96 to 108 (RSHDLRDRSDHRG) show a composition bias toward basic and acidic residues. Gly residues predominate over residues 109-119 (GGGGNGRGGSG). Composition is skewed to basic and acidic residues over residues 127-168 (KMRD…DRRG), 181-246 (SSRE…DWSE), and 268-303 (KPKEWVDRERNLPRDQHREKDYRDKDRDRDRDDRFS). The 28-residue stretch at 244-271 (WSEHVSSSGKMYYYNCKTEISQWEKPKE) folds into the WW domain. Polar residues-rich tracts occupy residues 304–314 (RSTYKHSNSSR) and 350–363 (GDSTPTSEASYSLS). A compositionally biased stretch (gly residues) spans 369-384 (HGGGPGGGGPGGGGGS). Composition is skewed to low complexity over residues 402–411 (TANSSASVAT) and 431–466 (TGATMLPTMSGMLNSNSSNSAGGSSSNASSSSLRNS). Positions 472-496 (GSTSGTTVPTLGSQDPHQHHLNSNA) are enriched in polar residues.

As to expression, expressed in adult head and thorax and in larval central nervous system and fat body.

The protein resides in the nucleus. The protein localises to the lysosome. Its function is as follows. Acts as a linker between gene transcription and histone H2B monoubiquitination at 'Lys-118'. Regulates the cell-cycle checkpoint activation in response to DNA damage. Positive regulator of amino acid starvation-induced autophagy. Also acts as a negative regulator of basal autophagy. Positively regulates mTor activity. Promotes, in an energy-dependent manner, the assembly of the TTT complex and the RUVBL complex composed of pont and rept into the TTT-RUVBL complex. This leads to dimerization of the mTORC1 complex and its subsequent activation. May negatively regulate the ubiquitin proteasome pathway. Required for habituation, a form of non-associative learning. The sequence is that of WW domain-containing adapter protein with coiled-coil homolog from Drosophila melanogaster (Fruit fly).